Here is a 181-residue protein sequence, read N- to C-terminus: MRHNNAGKRLGRTTSHRIAMYRNMVTSFLNHERITTTDAKAKGLRSIAEKMITLGKKGDLNAMRQAASFIRDKKVVTKLFTTIAPRYAERAGGYTRIIKLGIRPGDNAPLSVIELVEETIQAPKAKKKIAAKKPATKVAAKAASATAESAPVATANDAAPAEEAEVQGVKDPAEDCEAKAD.

Over residues 141-159 (KAASATAESAPVATANDAA) the composition is skewed to low complexity. The interval 141–181 (KAASATAESAPVATANDAAPAEEAEVQGVKDPAEDCEAKAD) is disordered. The span at 171-181 (DPAEDCEAKAD) shows a compositional bias: basic and acidic residues.

This sequence belongs to the bacterial ribosomal protein bL17 family. Part of the 50S ribosomal subunit. Contacts protein L32.

This chain is Large ribosomal subunit protein bL17, found in Geotalea daltonii (strain DSM 22248 / JCM 15807 / FRC-32) (Geobacter daltonii).